Here is a 526-residue protein sequence, read N- to C-terminus: Phosphoenolpyruvate carboxylase (526 aa).

This sequence belongs to the PEPCase type 2 family. In terms of assembly, homotetramer. Requires Mg(2+) as cofactor.

The catalysed reaction is oxaloacetate + phosphate = phosphoenolpyruvate + hydrogencarbonate. Catalyzes the irreversible beta-carboxylation of phosphoenolpyruvate (PEP) to form oxaloacetate (OAA), a four-carbon dicarboxylic acid source for the tricarboxylic acid cycle. The chain is Phosphoenolpyruvate carboxylase from Methanosarcina acetivorans (strain ATCC 35395 / DSM 2834 / JCM 12185 / C2A).